Consider the following 100-residue polypeptide: Sweet protein mabinlin-4 (100 aa).

4 disulfides stabilise this stretch: Cys4/Cys49, Cys17/Cys38, Cys39/Cys87, and Cys51/Cys95.

It belongs to the 2S seed storage albumins family. In terms of assembly, heterodimer of a small A and a large B chain linked by disulfide bonds.

Functionally, heat stable 2S seed storage protein having sweetness-inducing activity. This chain is Sweet protein mabinlin-4, found in Capparis masaikai (Mabinlang).